The sequence spans 432 residues: Adenylosuccinate synthetase (432 aa).

Residues 13–19 and 41–43 each bind GTP; these read GDEGKGK and GHT. Asp-14 serves as the catalytic Proton acceptor. 2 residues coordinate Mg(2+): Asp-14 and Gly-41. IMP is bound by residues 14–17, 39–42, Thr-130, Arg-144, Gln-225, Thr-240, and Arg-304; these read DEGK and NAGH. His-42 (proton donor) is an active-site residue. Residue 300–306 coordinates substrate; sequence STTGRPR. Residues Arg-306, 332 to 334, and 416 to 418 contribute to the GTP site; these read KLD and STG.

The protein belongs to the adenylosuccinate synthetase family. Homodimer. Mg(2+) serves as cofactor.

Its subcellular location is the cytoplasm. It catalyses the reaction IMP + L-aspartate + GTP = N(6)-(1,2-dicarboxyethyl)-AMP + GDP + phosphate + 2 H(+). Its pathway is purine metabolism; AMP biosynthesis via de novo pathway; AMP from IMP: step 1/2. Its function is as follows. Plays an important role in the de novo pathway of purine nucleotide biosynthesis. Catalyzes the first committed step in the biosynthesis of AMP from IMP. The protein is Adenylosuccinate synthetase of Nitrosomonas eutropha (strain DSM 101675 / C91 / Nm57).